A 359-amino-acid chain; its full sequence is uncharacterized protein (359 aa).

Over residues 73–88 (AATAGTTPATGASGSA) the composition is skewed to low complexity. The disordered stretch occupies residues 73 to 93 (AATAGTTPATGASGSARPTDA). One can recognise a Macro domain in the interval 179–354 (PSTCRGDNVS…AFSAAIQAGE (176 aa)).

This is an uncharacterized protein from Mycobacterium tuberculosis (strain ATCC 25618 / H37Rv).